The chain runs to 436 residues: UDP-glucuronate 4-epimerase 5 (436 aa).

2 consecutive transmembrane segments (helical) span residues 36-56 (LTLW…LSPP) and 95-115 (GLTV…SIAL). Position 97–128 (97–128 (TVLVTGASGFVGTHVSIALRRRGDGVLGLDNF)) interacts with NAD(+). The active-site Proton acceptor is Tyr247.

This sequence belongs to the NAD(P)-dependent epimerase/dehydratase family. In terms of assembly, homodimer. In terms of tissue distribution, in leaves, pollen and siliques, but not in roots or flowers.

It localises to the golgi apparatus. The protein localises to the golgi stack membrane. It catalyses the reaction UDP-alpha-D-glucuronate = UDP-alpha-D-galacturonate. Involved in the synthesis of the negatively charged monosaccharide that forms the backbone of pectic cell wall components. The chain is UDP-glucuronate 4-epimerase 5 (GAE5) from Arabidopsis thaliana (Mouse-ear cress).